The chain runs to 115 residues: Chondroitin proteoglycan 8 (115 aa).

Residues 1-16 (MRPFILLALLVSVTVA) form the signal peptide. The interval 33–96 (VRRTTRDASD…GSGAAEVTSV (64 aa)) is disordered. O-linked (Xyl...) (chondroitin sulfate) serine glycosylation is found at S61, S63, S84, S88, and S109.

This Caenorhabditis elegans protein is Chondroitin proteoglycan 8.